Consider the following 298-residue polypeptide: tRNA pseudouridine synthase B (298 aa).

D42 functions as the Nucleophile in the catalytic mechanism.

This sequence belongs to the pseudouridine synthase TruB family. Type 1 subfamily.

It catalyses the reaction uridine(55) in tRNA = pseudouridine(55) in tRNA. Responsible for synthesis of pseudouridine from uracil-55 in the psi GC loop of transfer RNAs. In Mycobacterium tuberculosis (strain CDC 1551 / Oshkosh), this protein is tRNA pseudouridine synthase B.